A 517-amino-acid chain; its full sequence is MAKERCQKRSFQDTLEDIKNRMKEKRNKNLAGIGKRKSFIVAPGQVPTNTATLLRYYQDNNRLLVLALENEKSKVREAQDVILQLRKECYYLTCQLYALKEKLTSRQSEETTQNWKGRPSDVVSSIDNTTRDLSGKSLQQIAVEETDCPYQTTEPSPAVTPETQGCDFDSGKVESTDEVLPRTISIRRHLRKDFSNISHSTTLEDCKASPRVAQSLEVKGSRCREVTVTLHRLENVCLWNKDQISLCSRLINPAKITETEVILSSKPEQIESKHKRARKRRAEQRRTKQRCKSKSSLRSKGNKNKDKQGLPPTTLDGGIGSCDAYDFNLKGTVHPTPFRQKMNNGCNKETDSSNSEVSDLECSTSEDESDDLYLPPSKRLRDYRESERAVTRPRSKRGLQYPDGKERKEVLPSTAPTGIPPETQESPRCSLKDVTNILQCPRVKIRKPSLPPKRREDSPAVALTKRRCSTIKSYKEPTLASKLRRGDPFTDLCFLNSPIFKQKRGMRCPKRRTKQTQ.

Residues 1 to 89 (MAKERCQKRS…DVILQLRKEC (89 aa)) adopt a coiled-coil conformation. The segment at 1–176 (MAKERCQKRS…DFDSGKVEST (176 aa)) is necessary for interaction with PPP2CA and PPP2R1A. Disordered regions lie at residues 107–136 (QSEE…LSGK), 149–173 (PYQT…SGKV), 267–317 (PEQI…TLDG), and 334–427 (HPTP…QESP). Residues 268-291 (EQIESKHKRARKRRAEQRRTKQRC) adopt a coiled-coil conformation. The segment covering 273 to 302 (KHKRARKRRAEQRRTKQRCKSKSSLRSKGN) has biased composition (basic residues). Positions 341–363 (KMNNGCNKETDSSNSEVSDLECS) are enriched in polar residues. A compositionally biased stretch (basic and acidic residues) spans 379–390 (RLRDYRESERAV). Ser426 is subject to Phosphoserine. A PXVXL/I motif motif is present at residues 441 to 445 (PRVKI). The short motif at 447-455 (KPSLPPKRR) is the D-box element. At Ser497 the chain carries Phosphoserine; by NEK2.

The protein belongs to the shugoshin family. In terms of assembly, interacts with PPP2CA (or PPP2CB), PPP2R1B, PPP2R5A, PPP2R5B, PPP2R5C, PPP2R5D, PPP2R5E, SET, LRRC59, RBM10 (or RBM5), RPL10A, RPL28, RPL7, RPL7A and RPLP1. Interaction with protein phosphatase 2A occurs most probably through direct binding to the regulatory B56 subunits: PPP2R1B, PPP2R5A, PPP2R5B, PPP2R5C, PPP2R5D, PPP2R5E. Interacts with PPP2R1A and NEK2. Interacts with CDCA8. Post-translationally, ubiquitinated and degraded during mitotic exit by APC/C-Cdh1. In terms of processing, phosphorylation by NEK2 is essential for chromosome congression in mitosis and for the proper attachment of spindle microtubule to the kinetochore. Phosphorylated by PLK1 and AUKRB. Ubiquitously expressed in proliferating cells. Moderately expressed in the oocytes.

It localises to the nucleus. It is found in the chromosome. The protein resides in the centromere. Its subcellular location is the kinetochore. The protein localises to the cytoplasm. It localises to the cytoskeleton. It is found in the spindle pole. The protein resides in the microtubule organizing center. Its subcellular location is the centrosome. The protein localises to the nucleus speckle. Plays a central role in chromosome cohesion during mitosis by preventing premature dissociation of cohesin complex from centromeres after prophase, when most of cohesin complex dissociates from chromosomes arms. May act by preventing phosphorylation of the STAG2 subunit of cohesin complex at the centromere, ensuring cohesin persistence at centromere until cohesin cleavage by ESPL1/separase at anaphase. Essential for proper chromosome segregation during mitosis and this function requires interaction with PPP2R1A. Its phosphorylated form is necessary for chromosome congression and for the proper attachment of spindle microtubule to the kinetochore. Necessary for kinetochore localization of PLK1 and CENPF. May play a role in the tension sensing mechanism of the spindle-assembly checkpoint by regulating PLK1 kinetochore affinity. Involved in centromeric enrichment of AUKRB in prometaphase. The protein is Shugoshin 1 of Mus musculus (Mouse).